Reading from the N-terminus, the 469-residue chain is Cell division protein FtsP (469 aa).

Residues 1-29 (MPRLSRRQLLKTAAISTALSTVPAPLLAA) constitute a signal peptide (tat-type signal). The Plastocyanin-like domain maps to 228-286 (IRLRLLNASLARAYDLRLDNDQEMLLIAQDLSFLPKAKSVKSLVLSPGERAEILVNMNE).

The protein belongs to the FtsP family. In terms of processing, predicted to be exported by the Tat system. The position of the signal peptide cleavage has not been experimentally proven.

The protein localises to the periplasm. Functionally, cell division protein that is required for growth during stress conditions. May be involved in protecting or stabilizing the divisomal assembly under conditions of stress. The protein is Cell division protein FtsP of Haemophilus influenzae (strain 86-028NP).